The sequence spans 372 residues: MKIGIPKEIKNNENRVAITPAGVMTLVKAGHEVYVETEGGAGSGFSDSEYEKAGAADRCRTWRDAWTAEMVLKVKEPLAREFRYFRPGLILFTYLHLAAAERVTKAVVEQKVVGIAYETVQLANGSLPLLTPMSEVAGRMSVQVGAQFLEKPHGGKGILLGGVPGVRRGKVTIIGGGTAGTNAAKIGVGLGADVTILDINAERLRELDDLFGDHVTTLMSNSYHIAECVRESDLVVGAVLIPGAKAKLVTEEMVRSMTPGSVLVDIAIDQGGIFETTDRVTTHDDPTYVKHGVVHYAVANMPGAVPRTSTFALTNVTIPYALQIANKGYRAGCLDNPALLKGINTLDGHIVYEAVAAAHNMPYTDVHSLLHG.

The substrate site is built by arginine 15 and lysine 75. Residue histidine 96 is the Proton donor/acceptor of the active site. NAD(+)-binding positions include serine 134, 178 to 179, aspartate 198, serine 220, 239 to 240, 266 to 269, arginine 279, and 298 to 301; these read TA, VL, IAID, and VANM. The Proton donor/acceptor role is filled by aspartate 269.

It belongs to the AlaDH/PNT family. In terms of assembly, homohexamer.

The protein localises to the cytoplasm. It carries out the reaction L-alanine + NAD(+) + H2O = pyruvate + NH4(+) + NADH + H(+). It functions in the pathway amino-acid degradation; L-alanine degradation via dehydrogenase pathway; NH(3) and pyruvate from L-alanine: step 1/1. In terms of biological role, catalyzes the reversible reductive amination of pyruvate to L-alanine. A key factor in the assimilation of L-alanine as an energy source via the tricarboxylic acid cycle during sporulation. This chain is Alanine dehydrogenase (ald), found in Geobacillus stearothermophilus (Bacillus stearothermophilus).